The following is a 247-amino-acid chain: MAQQTSGRQPRYKRILLKLSGEALMGSEDFGIDPKVLDRMALEVGQLVGIGVQVGLVIGGGNLFRGAALSAAGMDRVTGDHMGMLATVMNALAMRDALERSNIPAIVMSAISMVGVTDHYDRRKAMRHLKTGEVVIFAAGTGNPFFTTDSAACLRAIEIDADVVLKATKVDGVYTADPFKDPHAEKFERLTYDEVLDRKLGVMDLTAICLCRDHNMPLRVFNMNKPGALLNVVVGGAEGTLIEEDAQ.

18 to 21 (KLSG) is an ATP binding site. G60 provides a ligand contact to UMP. ATP-binding residues include G61 and R65. UMP is bound by residues D80 and 141–148 (TGNPFFTT). Positions 168, 174, and 177 each coordinate ATP.

This sequence belongs to the UMP kinase family. In terms of assembly, homohexamer.

Its subcellular location is the cytoplasm. The enzyme catalyses UMP + ATP = UDP + ADP. It participates in pyrimidine metabolism; CTP biosynthesis via de novo pathway; UDP from UMP (UMPK route): step 1/1. Its activity is regulated as follows. Inhibited by UTP. In terms of biological role, catalyzes the reversible phosphorylation of UMP to UDP. This Ectopseudomonas mendocina (strain ymp) (Pseudomonas mendocina) protein is Uridylate kinase.